A 977-amino-acid chain; its full sequence is Protein bicaudal C homolog 1 (977 aa).

A disordered region spans residues 1 to 43 (MASQSEPGYLAAAQSDPGSNSERSTDSPVAGSEDDLVAAAPLL). Phosphoserine occurs at positions 27, 32, and 45. 2 consecutive KH domains span residues 134-201 (RVTL…RARI) and 286-350 (PVST…RQYL). The residue at position 400 (Lys400) is an N6-acetyllysine. Polar residues predominate over residues 590–621 (SLGEKVLSSNHGDPSMQTAGPEQASPKSNSVE). Disordered stretches follow at residues 590-622 (SLGE…SVEG), 667-702 (GTKN…GSER), and 794-848 (EGSS…KSRE). A phosphoserine mark is found at Ser614 and Ser681. Residues 692-702 (LADKKAPGSER) show a composition bias toward basic and acidic residues. Positions 794 to 803 (EGSSLSLSRS) are enriched in low complexity. The SAM domain maps to 875 to 938 (FKGSDLPELF…LLAISELSKN (64 aa)).

It belongs to the BicC family. In terms of assembly, interacts (via KH domains) with ANKS6 (via SAM domain) in an RNA-dependent manner. Interacts with ANKS3. In terms of tissue distribution, in the adult, predominantly expressed in heart and kidney. In 8 week old mice, expressed in growing primary oocytes and in the stromal cells of the theca.

It localises to the cytoplasm. Functionally, putative RNA-binding protein. May be involved in regulating gene expression during embryonic development. This is Protein bicaudal C homolog 1 (Bicc1) from Mus musculus (Mouse).